A 329-amino-acid chain; its full sequence is Protein Brevis radix-like 4 (329 aa).

The disordered stretch occupies residues 12–37; sequence SGTSRHHGQQRRGGSPPPRGRTTSVY. Residues 86 to 142 form the BRX 1 domain; the sequence is REWVAQVEPGVQITFVSLAGGGGNDLKRIRFSREMYDKWQAQKWWGENNERIMELYN. The tract at residues 151–263 is disordered; that stretch reads LPTPPRSDDG…TTSCSSRDEV (113 aa). 2 stretches are compositionally biased toward low complexity: residues 222–236 and 243–252; these read SNPS…QQPQ and AAASDAMDAA. The span at 253 to 263 shows a compositional bias: polar residues; it reads RTTSCSSRDEV. The 56-residue stretch at 274–329 folds into the BRX 2 domain; that stretch reads TEWVIQDEPGVYITVRELADGTRELRRVRFSRERFAELNAKLWWEENKERIQAQYL.

The protein belongs to the BRX family.

The protein localises to the nucleus. The sequence is that of Protein Brevis radix-like 4 (BRXL4) from Oryza sativa subsp. japonica (Rice).